The following is a 189-amino-acid chain: dCTP deaminase (189 aa).

DCTP contacts are provided by residues 112-117, 136-138, Q157, Y171, and Q181; these read KSTYAR and TLE. Residue E138 is the Proton donor/acceptor of the active site.

This sequence belongs to the dCTP deaminase family. In terms of assembly, homotrimer.

It carries out the reaction dCTP + H2O + H(+) = dUTP + NH4(+). It functions in the pathway pyrimidine metabolism; dUMP biosynthesis; dUMP from dCTP (dUTP route): step 1/2. Its function is as follows. Catalyzes the deamination of dCTP to dUTP. This chain is dCTP deaminase, found in Xanthomonas oryzae pv. oryzae (strain MAFF 311018).